Reading from the N-terminus, the 122-residue chain is Aspartate 1-decarboxylase (122 aa).

Ser-25 functions as the Schiff-base intermediate with substrate; via pyruvic acid in the catalytic mechanism. Position 25 is a pyruvic acid (Ser) (Ser-25). Residue Thr-57 participates in substrate binding. The active-site Proton donor is the Tyr-58. 73–75 (GAA) lines the substrate pocket.

It belongs to the PanD family. As to quaternary structure, heterooctamer of four alpha and four beta subunits. It depends on pyruvate as a cofactor. In terms of processing, is synthesized initially as an inactive proenzyme, which is activated by self-cleavage at a specific serine bond to produce a beta-subunit with a hydroxyl group at its C-terminus and an alpha-subunit with a pyruvoyl group at its N-terminus.

Its subcellular location is the cytoplasm. The enzyme catalyses L-aspartate + H(+) = beta-alanine + CO2. It participates in cofactor biosynthesis; (R)-pantothenate biosynthesis; beta-alanine from L-aspartate: step 1/1. In terms of biological role, catalyzes the pyruvoyl-dependent decarboxylation of aspartate to produce beta-alanine. This chain is Aspartate 1-decarboxylase, found in Bordetella parapertussis (strain 12822 / ATCC BAA-587 / NCTC 13253).